Here is a 150-residue protein sequence, read N- to C-terminus: 3-hydroxyacyl-[acyl-carrier-protein] dehydratase FabZ (150 aa).

H54 is an active-site residue.

This sequence belongs to the thioester dehydratase family. FabZ subfamily.

It is found in the cytoplasm. It catalyses the reaction a (3R)-hydroxyacyl-[ACP] = a (2E)-enoyl-[ACP] + H2O. In terms of biological role, involved in unsaturated fatty acids biosynthesis. Catalyzes the dehydration of short chain beta-hydroxyacyl-ACPs and long chain saturated and unsaturated beta-hydroxyacyl-ACPs. The polypeptide is 3-hydroxyacyl-[acyl-carrier-protein] dehydratase FabZ (Chromobacterium violaceum (strain ATCC 12472 / DSM 30191 / JCM 1249 / CCUG 213 / NBRC 12614 / NCIMB 9131 / NCTC 9757 / MK)).